The sequence spans 342 residues: MPVSLLDDFLAYTLAGTRPAASEAQGTCAGGVRWSWLDDGVLLMEPAVQEEGMRSVLVSAGVHGDETAPIELLAFLVRDIAHGTAALTGRLLVILGNVDAMRDACRYRDDDLNRLFSGRHLQLPQSHEAPRAAALERAATRFFAAAPDNPGARWHIDMHTAIRASAFEQFALLPHTGKPFSRAMFEWLGEARISAVLLHTTRGNTYSHFTAQACGALACTLELGKVRPFGQNDLTRFAGADHAVRHLLAGMRGEVRAPMPRAFTVIDQITRQSEAFELLVAPDVANFTPFAKDTVLARDGDYRYVVRHDEERLVFPNATVKPGLRAGLMVIETTQDTLSKLV.

3 residues coordinate Zn(2+): histidine 63, glutamate 66, and histidine 159. Residue glutamate 222 is part of the active site.

Belongs to the AspA/AstE family. Succinylglutamate desuccinylase subfamily. Zn(2+) serves as cofactor.

The catalysed reaction is N-succinyl-L-glutamate + H2O = L-glutamate + succinate. It participates in amino-acid degradation; L-arginine degradation via AST pathway; L-glutamate and succinate from L-arginine: step 5/5. Its function is as follows. Transforms N(2)-succinylglutamate into succinate and glutamate. The chain is Succinylglutamate desuccinylase from Paraburkholderia xenovorans (strain LB400).